The following is a 455-amino-acid chain: P2X purinoceptor 5 (455 aa).

At 1 to 30 (MGQAAWKGFVLSLFDYKTAKFVVAKSKKVG) the chain is on the cytoplasmic side. Residues 31-50 (LLYRVLQLTILLYLLIWVFL) form a helical membrane-spanning segment. The Extracellular segment spans residues 51–339 (IKKSYQDIDT…KFSIIPTVIN (289 aa)). ATP is bound at residue 69 to 71 (KVK). The N-linked (GlcNAc...) asparagine glycan is linked to N77. Intrachain disulfides connect C118–C169, C129–C152, and C135–C163. N157 carries an N-linked (GlcNAc...) asparagine glycan. Residue T189 coordinates ATP. N202 carries an N-linked (GlcNAc...) asparagine glycan. Disulfide bonds link C220-C229 and C263-C272. Residues 294–296 (NFR) and K314 each bind ATP. A helical transmembrane segment spans residues 340-362 (IGSGLALMGAGAFFCDLVLIYLI). Topologically, residues 363 to 455 (RKSEFYRDKK…PSQILQTVKT (93 aa)) are cytoplasmic.

It belongs to the P2X receptor family. As to quaternary structure, functional P2XRs are organized as homomeric and heteromeric trimers. Homotrimer. Forms heterotrimer with P2RX1. In terms of tissue distribution, expressed in a number of tissues, with highest levels detected in heart and kidney.

The protein localises to the cell membrane. It catalyses the reaction Na(+)(in) = Na(+)(out). The enzyme catalyses Ca(2+)(in) = Ca(2+)(out). It carries out the reaction chloride(in) = chloride(out). Its activity is regulated as follows. Activated by ATP. Slowly desensitizing. Not activated by ATP agonist alpha/beta-methylene-ATP. Highly sensitive to the antagonists suramin and PPADS. In terms of biological role, ATP-gated nonselective transmembrane cation channel permeable to potassium, sodium and calcium. Unlike other P2RX receptors, the P2X5 receptor is also permeable to chloride. Acts as an important regulator of inflammatory-related bone loss and osteoclast multinucleation. The protein is P2X purinoceptor 5 of Mus musculus (Mouse).